The primary structure comprises 381 residues: Pentraxin-related protein PTX3 (381 aa).

The first 17 residues, 1–17, serve as a signal peptide directing secretion; it reads MHLPAILLCALWSAVVA. 2 disulfide bridges follow: C179/C357 and C210/C271. Residues 179 to 381 enclose the Pentraxin (PTX) domain; it reads CETAIFFPMR…QAHGGAQYVS (203 aa). N-linked (GlcNAc...) asparagine glycosylation occurs at N220.

Homooctamer; disulfide-linked. Binds to C1q.

It localises to the secreted. Functionally, plays a role in the regulation of innate resistance to pathogens, inflammatory reactions, possibly clearance of self-components and female fertility. The polypeptide is Pentraxin-related protein PTX3 (Ptx3) (Mus musculus (Mouse)).